Reading from the N-terminus, the 808-residue chain is Protein Ac66 (808 aa).

The segment covering 132–141 has biased composition (pro residues); that stretch reads PFSTPPPTQP. Positions 132-151 are disordered; that stretch reads PFSTPPPTQPPESNVAGVGG.

In terms of assembly, interacts with the putative E3 ligase IE0 and with viral ubiquitin/vUbi.

The protein localises to the host nucleus. It is found in the host cytoplasm. Plays an essential role in the efficient egress of nucleocapsids from the host nucleus to the cytoplasm. In Lepidoptera (butterflies and moths), this protein is Protein Ac66 (Ac66).